The following is a 182-amino-acid chain: uncharacterized protein (182 aa).

2 BNR repeats span residues 58-69 and 102-113; these read WISFDAGENWET and YITDDRGESWRA.

This is an uncharacterized protein from Saccharomyces cerevisiae (strain ATCC 204508 / S288c) (Baker's yeast).